Reading from the N-terminus, the 432-residue chain is Adenylosuccinate synthetase (432 aa).

GTP contacts are provided by residues 13-19 (GDEGKGK) and 41-43 (GHT). Residue D14 is the Proton acceptor of the active site. Positions 14 and 41 each coordinate Mg(2+). Residues 14–17 (DEGK), 39–42 (NAGH), T130, R144, Q225, T240, and R304 contribute to the IMP site. H42 functions as the Proton donor in the catalytic mechanism. A substrate-binding site is contributed by 300-306 (AVTGRPR). GTP-binding positions include R306, 332–334 (KLD), and 415–417 (STG).

The protein belongs to the adenylosuccinate synthetase family. In terms of assembly, homodimer. Mg(2+) serves as cofactor.

Its subcellular location is the cytoplasm. The enzyme catalyses IMP + L-aspartate + GTP = N(6)-(1,2-dicarboxyethyl)-AMP + GDP + phosphate + 2 H(+). Its pathway is purine metabolism; AMP biosynthesis via de novo pathway; AMP from IMP: step 1/2. Functionally, plays an important role in the de novo pathway of purine nucleotide biosynthesis. Catalyzes the first committed step in the biosynthesis of AMP from IMP. The polypeptide is Adenylosuccinate synthetase (Actinobacillus pleuropneumoniae serotype 3 (strain JL03)).